The chain runs to 122 residues: Large ribosomal subunit protein uL14 (122 aa).

Belongs to the universal ribosomal protein uL14 family. Part of the 50S ribosomal subunit. Forms a cluster with proteins L3 and L19. In the 70S ribosome, L14 and L19 interact and together make contacts with the 16S rRNA in bridges B5 and B8.

In terms of biological role, binds to 23S rRNA. Forms part of two intersubunit bridges in the 70S ribosome. The protein is Large ribosomal subunit protein uL14 of Herpetosiphon aurantiacus (strain ATCC 23779 / DSM 785 / 114-95).